We begin with the raw amino-acid sequence, 443 residues long: C4-dicarboxylate transport protein (443 aa).

Helical transmembrane passes span 7–26 (SLYVQVIIAIVLGILVGALF), 46–63 (MVIAPIIFATVVSGVAHM), 76–98 (ALIYFEVVSTLALIIGMVVMNVL), 140–162 (LVSAFTGGELLPVLLVALLFGFA), 183–205 (VVFVILGFIMRLAPIGAFGAMAF), 218–240 (LGYLMGSFYLTCLLFIFVVLGLI), and 350–372 (FITLAATLGAVGHVPVAGMALIL). A disordered region spans residues 415–443 (GEDLPTTEPDVASEERGEGREIDSSRPVT). Over residues 427–443 (SEERGEGREIDSSRPVT) the composition is skewed to basic and acidic residues.

It belongs to the dicarboxylate/amino acid:cation symporter (DAACS) (TC 2.A.23) family.

It localises to the cell membrane. Functionally, responsible for the transport of dicarboxylates such as succinate, fumarate, and malate across the membrane. This Deinococcus radiodurans (strain ATCC 13939 / DSM 20539 / JCM 16871 / CCUG 27074 / LMG 4051 / NBRC 15346 / NCIMB 9279 / VKM B-1422 / R1) protein is C4-dicarboxylate transport protein (dctA).